The following is a 601-amino-acid chain: Glutathione-regulated potassium-efflux system protein KefB (601 aa).

13 helical membrane-spanning segments follow: residues 4 to 24 (SDFL…VPLA), 29 to 49 (IGAV…GLGF), 55 to 75 (EILH…GLEL), 87 to 107 (IFGV…GLLM), 115 to 135 (AAVV…LQLM), 152 to 172 (VLLF…LLAG), 177 to 197 (HFDW…LIGG), 207 to 227 (FIAA…LVLG), 230 to 250 (LFMD…GVLL), 268 to 288 (GLLL…GVLY), 291 to 311 (LLWV…VLYL), 324 to 344 (MQFA…FSTA), and 356 to 376 (ALLL…MKLV). The RCK N-terminal domain maps to 400–519 (KPQVIVVGFG…AGVTQFSRET (120 aa)).

It belongs to the monovalent cation:proton antiporter 2 (CPA2) transporter (TC 2.A.37) family. KefB subfamily. As to quaternary structure, interacts with the regulatory subunit KefG.

Its subcellular location is the cell inner membrane. Functionally, pore-forming subunit of a potassium efflux system that confers protection against electrophiles. Catalyzes K(+)/H(+) antiport. In Escherichia coli O81 (strain ED1a), this protein is Glutathione-regulated potassium-efflux system protein KefB.